A 201-amino-acid polypeptide reads, in one-letter code: 3-isopropylmalate dehydratase small subunit (201 aa).

This sequence belongs to the LeuD family. LeuD type 1 subfamily. As to quaternary structure, heterodimer of LeuC and LeuD.

It carries out the reaction (2R,3S)-3-isopropylmalate = (2S)-2-isopropylmalate. It functions in the pathway amino-acid biosynthesis; L-leucine biosynthesis; L-leucine from 3-methyl-2-oxobutanoate: step 2/4. Its function is as follows. Catalyzes the isomerization between 2-isopropylmalate and 3-isopropylmalate, via the formation of 2-isopropylmaleate. The protein is 3-isopropylmalate dehydratase small subunit of Agrobacterium fabrum (strain C58 / ATCC 33970) (Agrobacterium tumefaciens (strain C58)).